Consider the following 473-residue polypeptide: Poly(A) polymerase catalytic subunit (473 aa).

Active-site residues include Asp-193 and Asp-195.

This sequence belongs to the poxviridae poly(A) polymerase catalytic subunit family. Heterodimer of a large (catalytic) subunit and a small (regulatory) subunit.

The catalysed reaction is RNA(n) + ATP = RNA(n)-3'-adenine ribonucleotide + diphosphate. Polymerase that creates the 3'-poly(A) tail of mRNA's. This is Poly(A) polymerase catalytic subunit (PAPL) from Crocodylus johnstoni (Australian freshwater crocodile).